We begin with the raw amino-acid sequence, 85 residues long: UPF0297 protein CLL_A1175 (85 aa).

The protein belongs to the UPF0297 family.

The protein is UPF0297 protein CLL_A1175 of Clostridium botulinum (strain Eklund 17B / Type B).